A 165-amino-acid chain; its full sequence is Shikimate kinase (165 aa).

12 to 17 contributes to the ATP binding site; sequence GCGKST. Residue serine 16 coordinates Mg(2+). Aspartate 34, arginine 57, and glycine 79 together coordinate substrate. Arginine 116 serves as a coordination point for ATP. Residue arginine 133 participates in substrate binding.

Belongs to the shikimate kinase family. In terms of assembly, monomer. Mg(2+) serves as cofactor.

It localises to the cytoplasm. The enzyme catalyses shikimate + ATP = 3-phosphoshikimate + ADP + H(+). It functions in the pathway metabolic intermediate biosynthesis; chorismate biosynthesis; chorismate from D-erythrose 4-phosphate and phosphoenolpyruvate: step 5/7. Catalyzes the specific phosphorylation of the 3-hydroxyl group of shikimic acid using ATP as a cosubstrate. The chain is Shikimate kinase from Clostridium botulinum (strain Eklund 17B / Type B).